The primary structure comprises 106 residues: NADH dehydrogenase [ubiquinone] iron-sulfur protein 5 (106 aa).

The region spanning 30 to 74 (AGRCHAFEKEWIECAHGIGYTRAEKECKIEYDDFVECLLRQKTMR) is the CHCH domain. Short sequence motifs (cx9C motif) lie at residues 33–43 (CHAFEKEWIEC) and 56–66 (CKIEYDDFVEC). Intrachain disulfides connect Cys-33-Cys-66 and Cys-43-Cys-56. The segment at 84-106 (DKLIKEGKYTPPPHHIGKGEPRP) is disordered.

This sequence belongs to the complex I NDUFS5 subunit family. As to quaternary structure, mammalian complex I is composed of 45 different subunits. This is a component of the iron-sulfur (IP) fragment of the enzyme.

Its subcellular location is the mitochondrion inner membrane. It is found in the mitochondrion intermembrane space. Its function is as follows. Accessory subunit of the mitochondrial membrane respiratory chain NADH dehydrogenase (Complex I), that is believed not to be involved in catalysis. Complex I functions in the transfer of electrons from NADH to the respiratory chain. The immediate electron acceptor for the enzyme is believed to be ubiquinone. This chain is NADH dehydrogenase [ubiquinone] iron-sulfur protein 5 (NDUFS5), found in Homo sapiens (Human).